We begin with the raw amino-acid sequence, 297 residues long: Formiminotransferase cyclodeaminase-like protein (297 aa).

Positions Leu-2–Trp-196 are formiminotransferase N-subdomain. The active-site For formimidoyltransferase activity is His-89. Gly-178–Gly-187 serves as a coordination point for folate.

It belongs to the formiminotransferase family. In terms of tissue distribution, expressed constitutively in roots, stems, leaves and flowers.

It localises to the golgi apparatus. Its subcellular location is the trans-Golgi network. It catalyses the reaction (6S)-5-formyl-5,6,7,8-tetrahydrofolate + L-glutamate = N-formyl-L-glutamate + (6S)-5,6,7,8-tetrahydrofolate + H(+). The enzyme catalyses 5-formimidoyltetrahydrofolate + L-glutamate = N-formimidoyl-L-glutamate + (6S)-5,6,7,8-tetrahydrofolate. The protein operates within one-carbon metabolism; tetrahydrofolate interconversion. Functionally, involved in the regulation of root growth. May regulate sorting and/or transportation of trans-Golgi network (TGN) vesicles in root cap peripheral cells, thus influencing the extracellular secretion of mucilage components in the root cap. This is Formiminotransferase cyclodeaminase-like protein from Arabidopsis thaliana (Mouse-ear cress).